The primary structure comprises 360 residues: 3-dehydroquinate synthase (360 aa).

NAD(+)-binding positions include Asp-70–Lys-75, Thr-128–Thr-129, Lys-141, and Lys-150. Glu-182, His-243, and His-259 together coordinate Zn(2+).

The protein belongs to the sugar phosphate cyclases superfamily. Dehydroquinate synthase family. NAD(+) is required as a cofactor. Requires Co(2+) as cofactor. It depends on Zn(2+) as a cofactor.

Its subcellular location is the cytoplasm. It catalyses the reaction 7-phospho-2-dehydro-3-deoxy-D-arabino-heptonate = 3-dehydroquinate + phosphate. It functions in the pathway metabolic intermediate biosynthesis; chorismate biosynthesis; chorismate from D-erythrose 4-phosphate and phosphoenolpyruvate: step 2/7. In terms of biological role, catalyzes the conversion of 3-deoxy-D-arabino-heptulosonate 7-phosphate (DAHP) to dehydroquinate (DHQ). The chain is 3-dehydroquinate synthase from Thermoplasma volcanium (strain ATCC 51530 / DSM 4299 / JCM 9571 / NBRC 15438 / GSS1).